A 616-amino-acid polypeptide reads, in one-letter code: uncharacterized protein (616 aa).

The protein belongs to the UbiD family.

This is an uncharacterized protein from Helicobacter pylori (strain ATCC 700392 / 26695) (Campylobacter pylori).